We begin with the raw amino-acid sequence, 358 residues long: Putative glycylpeptide N-tetradecanoyltransferase (358 aa).

Belongs to the NMT family.

The enzyme catalyses N-terminal glycyl-[protein] + tetradecanoyl-CoA = N-tetradecanoylglycyl-[protein] + CoA + H(+). In terms of biological role, adds a myristoyl group to the N-terminal glycine residue of certain proteins. The protein is Putative glycylpeptide N-tetradecanoyltransferase of Acanthamoeba polyphaga (Amoeba).